A 360-amino-acid polypeptide reads, in one-letter code: 45 kDa calcium-binding protein (360 aa).

A signal peptide spans 1 to 29 (MVSKQAFLFSLGSLYLSLLFIFLLMDVYA). Asn33 carries N-linked (GlcNAc...) asparagine glycosylation. 5 consecutive EF-hand domains span residues 96–131 (RNRR…KTEE), 135–170 (EAVN…SKGF), 231–266 (MLKF…TVEN), 276–311 (WVRD…MNEY), and 312–347 (NALN…FTGS). Positions 109, 111, 113, 115, 120, 148, 150, 152, 154, 159, 244, 246, 248, 250, 255, 289, 291, 293, 300, 325, 327, 329, and 336 each coordinate Ca(2+).

Belongs to the CREC family.

Its subcellular location is the golgi apparatus lumen. Functionally, may regulate calcium-dependent activities in the endoplasmic reticulum lumen or post-ER compartment. The sequence is that of 45 kDa calcium-binding protein (sdf4) from Xenopus laevis (African clawed frog).